A 121-amino-acid chain; its full sequence is Large ribosomal subunit protein uL18 (121 aa).

It belongs to the universal ribosomal protein uL18 family. In terms of assembly, part of the 50S ribosomal subunit; part of the 5S rRNA/L5/L18/L25 subcomplex. Contacts the 5S and 23S rRNAs.

This is one of the proteins that bind and probably mediate the attachment of the 5S RNA into the large ribosomal subunit, where it forms part of the central protuberance. This is Large ribosomal subunit protein uL18 from Paracidovorax citrulli (strain AAC00-1) (Acidovorax citrulli).